Reading from the N-terminus, the 210-residue chain is Imidazoleglycerol-phosphate dehydratase (210 aa).

The disordered stretch occupies residues 185–210; the sequence is PRRGGSIPSSKGVLEQAGDNNTEKSK.

The protein belongs to the imidazoleglycerol-phosphate dehydratase family.

It localises to the cytoplasm. The catalysed reaction is D-erythro-1-(imidazol-4-yl)glycerol 3-phosphate = 3-(imidazol-4-yl)-2-oxopropyl phosphate + H2O. Its pathway is amino-acid biosynthesis; L-histidine biosynthesis; L-histidine from 5-phospho-alpha-D-ribose 1-diphosphate: step 6/9. This is Imidazoleglycerol-phosphate dehydratase from Prochlorococcus marinus (strain SARG / CCMP1375 / SS120).